A 556-amino-acid chain; its full sequence is 2-succinyl-5-enolpyruvyl-6-hydroxy-3-cyclohexene-1-carboxylate synthase (556 aa).

Belongs to the TPP enzyme family. MenD subfamily. Homodimer. Requires Mg(2+) as cofactor. It depends on Mn(2+) as a cofactor. The cofactor is thiamine diphosphate.

The enzyme catalyses isochorismate + 2-oxoglutarate + H(+) = 5-enolpyruvoyl-6-hydroxy-2-succinyl-cyclohex-3-ene-1-carboxylate + CO2. The protein operates within quinol/quinone metabolism; 1,4-dihydroxy-2-naphthoate biosynthesis; 1,4-dihydroxy-2-naphthoate from chorismate: step 2/7. It participates in quinol/quinone metabolism; menaquinone biosynthesis. Its function is as follows. Catalyzes the thiamine diphosphate-dependent decarboxylation of 2-oxoglutarate and the subsequent addition of the resulting succinic semialdehyde-thiamine pyrophosphate anion to isochorismate to yield 2-succinyl-5-enolpyruvyl-6-hydroxy-3-cyclohexene-1-carboxylate (SEPHCHC). This is 2-succinyl-5-enolpyruvyl-6-hydroxy-3-cyclohexene-1-carboxylate synthase from Escherichia coli O157:H7.